A 557-amino-acid chain; its full sequence is Proline--tRNA ligase (557 aa).

Belongs to the class-II aminoacyl-tRNA synthetase family. ProS type 1 subfamily. In terms of assembly, homodimer.

The protein resides in the cytoplasm. It catalyses the reaction tRNA(Pro) + L-proline + ATP = L-prolyl-tRNA(Pro) + AMP + diphosphate. Catalyzes the attachment of proline to tRNA(Pro) in a two-step reaction: proline is first activated by ATP to form Pro-AMP and then transferred to the acceptor end of tRNA(Pro). As ProRS can inadvertently accommodate and process non-cognate amino acids such as alanine and cysteine, to avoid such errors it has two additional distinct editing activities against alanine. One activity is designated as 'pretransfer' editing and involves the tRNA(Pro)-independent hydrolysis of activated Ala-AMP. The other activity is designated 'posttransfer' editing and involves deacylation of mischarged Ala-tRNA(Pro). The misacylated Cys-tRNA(Pro) is not edited by ProRS. This Baumannia cicadellinicola subsp. Homalodisca coagulata protein is Proline--tRNA ligase.